The following is a 388-amino-acid chain: Trans-enoyl reductase tenC (388 aa).

Residue V51–K54 coordinates NADP(+). V142–M149 is a substrate binding site. NADP(+)-binding positions include S219–S222, Y237, and L284–D285. A substrate-binding site is contributed by S304 to F308. I373–K374 contacts NADP(+).

This sequence belongs to the zinc-containing alcohol dehydrogenase family. In terms of assembly, monomer.

Its pathway is secondary metabolite biosynthesis. Trans-enoyl reductase; part of the gene cluster that mediates the biosynthesis of tenellin-type 2-pyridones, iron-chelating compounds involved in iron stress tolerance, competition with the natural competitor fungus Metarhizium robertsii and insect hosts infection. TenC collaborates with the hybrid PKS-NRPS synthetase tenS to catalyze the assembly of the polyketide-amino acid backbone, since tenS lacks a designated enoylreductase (ER) domain. Upon formation of the polyketide backbone on the thiotemplate of tenS, the triketide is transferred to the NRPS module and linked to tyrosine to produce the pyrrolidine-2-dione intermediates, including pretellinin A, 11-hydropretellenin A, 12-hydropretellenin A, 13-hydropretellenin A, 14-hydropretellenin A, 12-oxopretellenin A and prototellinin D. The pathway begins with the assembly of the polyketide-amino acid backbone by the hybrid PKS-NRPS tenS with the help of the enoyl reductase tenC. These enzymes catalyze the synthesis of the pyrrolidine-2-dione intermediates pretellinin A, 11-hydropretellenin A, 12-hydropretellenin A, 13-hydropretellenin A, 14-hydropretellenin A, 12-oxopretellenin A and prototellinin D. The cytochrome P450 monooxygenase tenA then catalyzes an oxidative ring expansion of pretenellin A and 14-hydropretellenin A to form the 2-pyridone core, leading to pretenellin B and pyridovericin, respectively. The cytochrome P450 monooxygenase tenB is then required for the selective N-hydroxylation of the 2-pyridone nitrogen of yield tellinin and 15-hydroxytellenin (15-HT), respectively. The UDP-glucosyltransferase GT1 and the methyltransferase MT1, located outside the tenS gene cluster, contribute to the stepwise glycosylation and methylation of 15-HT to obtain the glycoside pyridovericin-N-O-(4-O-methyl-beta-D-glucopyranoside) (PMGP). Additional related compounds such as 1-O-methyl-15-HT, (8Z)-1-O-methyl-15-HT, and O-methyltenellin A are also produced but the enzymes involved in their biosynthesis have still to be determined. The chain is Trans-enoyl reductase tenC from Beauveria bassiana (White muscardine disease fungus).